The chain runs to 206 residues: Imidazoleglycerol-phosphate dehydratase (206 aa).

Belongs to the imidazoleglycerol-phosphate dehydratase family.

It is found in the cytoplasm. It catalyses the reaction D-erythro-1-(imidazol-4-yl)glycerol 3-phosphate = 3-(imidazol-4-yl)-2-oxopropyl phosphate + H2O. Its pathway is amino-acid biosynthesis; L-histidine biosynthesis; L-histidine from 5-phospho-alpha-D-ribose 1-diphosphate: step 6/9. This Mycolicibacterium smegmatis (strain ATCC 700084 / mc(2)155) (Mycobacterium smegmatis) protein is Imidazoleglycerol-phosphate dehydratase.